Here is a 314-residue protein sequence, read N- to C-terminus: Dihydropteroate synthase (314 aa).

The Pterin-binding domain occupies 10-294 (TVICGIINVT…DVASHRMAVE (285 aa)). Asn17 is a Mg(2+) binding site. (7,8-dihydropterin-6-yl)methyl diphosphate is bound by residues Thr57, Asp91, Asn110, Asp201, Lys237, and 282–284 (RVH).

The protein belongs to the DHPS family. In terms of assembly, homodimer or homotrimer. Requires Mg(2+) as cofactor.

The catalysed reaction is (7,8-dihydropterin-6-yl)methyl diphosphate + 4-aminobenzoate = 7,8-dihydropteroate + diphosphate. It participates in cofactor biosynthesis; tetrahydrofolate biosynthesis; 7,8-dihydrofolate from 2-amino-4-hydroxy-6-hydroxymethyl-7,8-dihydropteridine diphosphate and 4-aminobenzoate: step 1/2. Functionally, catalyzes the condensation of para-aminobenzoate (pABA) with 6-hydroxymethyl-7,8-dihydropterin diphosphate (DHPt-PP) to form 7,8-dihydropteroate (H2Pte), the immediate precursor of folate derivatives. This chain is Dihydropteroate synthase (sulA), found in Streptococcus pneumoniae serotype 4 (strain ATCC BAA-334 / TIGR4).